The primary structure comprises 446 residues: tRNA modification GTPase MnmE (446 aa).

Positions 28, 85, and 124 each coordinate (6S)-5-formyl-5,6,7,8-tetrahydrofolate. Residues 220-372 enclose the TrmE-type G domain; that stretch reads GLTVVLVGQP…LRAKLLQAAG (153 aa). Asn230 serves as a coordination point for K(+). GTP contacts are provided by residues 230–235, 249–255, and 274–277; these read NVGKSS, TEIAGTT, and DTAG. Ser234 lines the Mg(2+) pocket. K(+) is bound by residues Thr249, Ile251, and Thr254. Thr255 lines the Mg(2+) pocket. Lys446 contacts (6S)-5-formyl-5,6,7,8-tetrahydrofolate.

The protein belongs to the TRAFAC class TrmE-Era-EngA-EngB-Septin-like GTPase superfamily. TrmE GTPase family. Homodimer. Heterotetramer of two MnmE and two MnmG subunits. K(+) serves as cofactor.

Its subcellular location is the cytoplasm. Functionally, exhibits a very high intrinsic GTPase hydrolysis rate. Involved in the addition of a carboxymethylaminomethyl (cmnm) group at the wobble position (U34) of certain tRNAs, forming tRNA-cmnm(5)s(2)U34. This is tRNA modification GTPase MnmE from Thiobacillus denitrificans (strain ATCC 25259 / T1).